A 3106-amino-acid chain; its full sequence is Cilia- and flagella-associated protein 54 (3106 aa).

Low complexity-rich tracts occupy residues 1-24 (MASSRSSSSSSEESPDSETSVSPV), 34-48 (STAVLKSPSESKSSS), and 2356-2368 (ESCSPTSPETSTT). 2 disordered regions span residues 1–58 (MASS…THSE) and 2354–2374 (PEESCSPTSPETSTTESKDDS).

Belongs to the CFAP54 family. Expressed at high level in the testis and at a low level in the lung and brain.

The protein resides in the cytoplasm. Its subcellular location is the cytoskeleton. The protein localises to the cilium axoneme. In terms of biological role, required for assembly and function of cilia and flagella. The sequence is that of Cilia- and flagella-associated protein 54 from Mus musculus (Mouse).